Reading from the N-terminus, the 60-residue chain is Large ribosomal subunit protein bL32 (60 aa).

The protein belongs to the bacterial ribosomal protein bL32 family.

This is Large ribosomal subunit protein bL32 from Paramagnetospirillum magneticum (strain ATCC 700264 / AMB-1) (Magnetospirillum magneticum).